A 415-amino-acid polypeptide reads, in one-letter code: Levansucrase (415 aa).

Sucrose-binding residues include Trp-45, Asp-46, Ala-132, Arg-202, and Asp-203. Asp-46 serves as the catalytic Nucleophile. The Proton donor/acceptor role is filled by Glu-287.

It belongs to the glycosyl hydrolase 68 family.

It carries out the reaction [6)-beta-D-fructofuranosyl-(2-&gt;](n) alpha-D-glucopyranoside + sucrose = [6)-beta-D-fructofuranosyl-(2-&gt;](n+1) alpha-D-glucopyranoside + D-glucose. In terms of biological role, catalyzes the synthesis of levan, a fructose polymer, by transferring the fructosyl moiety from sucrose to a growing acceptor molecule. This chain is Levansucrase, found in Rahnella aquatilis (strain ATCC 33071 / DSM 4594 / JCM 1683 / NBRC 105701 / NCIMB 13365 / CIP 78.65).